The sequence spans 273 residues: Small ribosomal subunit protein uS3 (273 aa).

Positions 43-111 (IRQLMSTGME…QVQLNILEVK (69 aa)) constitute a KH type-2 domain. The segment covering 218–227 (QQAAAAPSRG) has biased composition (low complexity). Residues 218–273 (QQAAAAPSRGRAGDRPGRPGGDRRRRNDRPAAEAAPAAVEAPAAEAAAPAAEGGQA) form a disordered region. The segment covering 228-239 (RAGDRPGRPGGD) has biased composition (basic and acidic residues). The span at 249 to 273 (AEAAPAAVEAPAAEAAAPAAEGGQA) shows a compositional bias: low complexity.

Belongs to the universal ribosomal protein uS3 family. As to quaternary structure, part of the 30S ribosomal subunit. Forms a tight complex with proteins S10 and S14.

In terms of biological role, binds the lower part of the 30S subunit head. Binds mRNA in the 70S ribosome, positioning it for translation. This chain is Small ribosomal subunit protein uS3, found in Paenarthrobacter aurescens (strain TC1).